Here is a 1052-residue protein sequence, read N- to C-terminus: Ubiquitin-like modifier-activating enzyme 6 (1052 aa).

Met-1 carries the N-acetylmethionine modification. The tract at residues 1–21 is disordered; sequence MEGSEPVAAHQGEEASCSSWG. Position 46 (Arg-46) interacts with ATP. Thr-54 carries the post-translational modification Phosphothreonine. Ser-301 carries the post-translational modification Phosphoserine. Ala-470 and Asp-497 together coordinate ATP. Residues Asp-499 and Glu-502 each contribute to the Mg(2+) site. The ATP site is built by Asn-505, Arg-508, Gln-509, and Lys-521. At Lys-544 the chain carries N6-acetyllysine. Val-545 provides a ligand contact to ATP. Asp-569 contributes to the Mg(2+) binding site. Asn-570 provides a ligand contact to ATP. The active-site Glycyl thioester intermediate is the Cys-625. The residue at position 729 (Lys-729) is an N6-acetyllysine. Ser-737 is subject to Phosphoserine.

It belongs to the ubiquitin-activating E1 family. As to quaternary structure, forms a thioester with UBD in cells stimulated with tumor necrosis factor-alpha (TNFa) and interferon-gamma (IFNg). Widely expressed. Isoform 2 is predominantly expressed in testis with higher expression in adult testis than in fetal testis.

It carries out the reaction ATP + ubiquitin + [E1 ubiquitin-activating enzyme]-L-cysteine = AMP + diphosphate + S-ubiquitinyl-[E1 ubiquitin-activating enzyme]-L-cysteine.. Its pathway is protein modification; protein ubiquitination. Its function is as follows. Activates ubiquitin by first adenylating its C-terminal glycine residue with ATP, and thereafter linking this residue to the side chain of a cysteine residue in E1, yielding a ubiquitin-E1 thioester and free AMP. Specific for ubiquitin, does not activate ubiquitin-like peptides. Also activates UBD/FAT10 conjugation via adenylation of its C-terminal glycine. Differs from UBE1 in its specificity for substrate E2 charging. Does not charge cell cycle E2s, such as CDC34. Essential for embryonic development. Isoform 2 may play a key role in ubiquitin system and may influence spermatogenesis and male fertility. In Homo sapiens (Human), this protein is Ubiquitin-like modifier-activating enzyme 6 (UBA6).